The primary structure comprises 559 residues: MGTVSRAALILACLALASAASEGAFKASDQREMTPERLFQHLHEVGYAAPPSPPQTRRLRVDHSVTSLHDPPLFEEQREVQPPSSPEDIPVYEEDWPTFLNPNVDKAGPAVPQEAIPLQKEQPPPQVHIEQKEIDPPAQPQEEIVQKEVKPHTLAGQLPPEPRTWNPARHCQQGRRGVWGHRLDGFPPGRPSPDNLKQICLPERQHVIYGPWNLPQTGYSHLSRQGETLNVLETGYSRCCRCRSDTNRLDCLKLVWEDAMTQFCEAEFSVKTRPHLCCRLRGEERFSCFQKEAPRPDYLLRPCPVHQNGMSSGPQLPFPPGLPTPDNVKNICLLRRFRAVPRNLPATDAIQRQLQALTRLETEFQRCCRQGHNHTCTWKAWEGTLDGYCERELAIKTHPHSCCHYPPSPARDECFAHLAPYPNYDRDILTLDLSRVTPNLMGQLCGSGRVLSKHKQIPGLIQNMTIRCCELPYPEQACCGEEEKLAFIENLCGPRRNSWKDPALCCDLSPEDKQINCFNTNYLRNVALVAGDTGNATGLGEQGPTRGTDANPAPGSKEE.

The first 19 residues, 1–19 (MGTVSRAALILACLALASA), serve as a signal peptide directing secretion. A run of 2 repeats spans residues 170–298 (HCQQ…RPDY) and 302–424 (PCPV…YPNY). The 2 X approximate repeats stretch occupies residues 170–424 (HCQQGRRGVW…FAHLAPYPNY (255 aa)). Residue Asn-373 is glycosylated (N-linked (GlcNAc...) asparagine). Asn-463 and Asn-535 each carry an N-linked (GlcNAc...) (high mannose) asparagine glycan. A disordered region spans residues 535–559 (NATGLGEQGPTRGTDANPAPGSKEE). Ser-556 is subject to Phosphoserine.

Interacts (via C-terminus) with HSPG2 (via C-terminus). Interacts with EFEMP1/FBLN3 and LAMB3. Interacts with MMP9. As to expression, expressed in the surrounding connective tissues of developing long bones, but not in the cartilage. The long isoform is expressed in a number of tissues including liver, heart and lungs. The short isoform is expressed in skin and cartilage-containing tissues such as tail and front paw. No expression is found in brain.

The protein localises to the secreted. It localises to the extracellular space. It is found in the extracellular matrix. Involved in endochondral bone formation as negative regulator of bone mineralization. Stimulates the proliferation of endothelial cells and promotes angiogenesis. Inhibits MMP9 proteolytic activity. This is Extracellular matrix protein 1 (Ecm1) from Mus musculus (Mouse).